Here is a 166-residue protein sequence, read N- to C-terminus: 3-isopropylmalate dehydratase small subunit (166 aa).

This sequence belongs to the LeuD family. LeuD type 2 subfamily. As to quaternary structure, heterodimer of LeuC and LeuD.

It catalyses the reaction (2R,3S)-3-isopropylmalate = (2S)-2-isopropylmalate. It participates in amino-acid biosynthesis; L-leucine biosynthesis; L-leucine from 3-methyl-2-oxobutanoate: step 2/4. Functionally, catalyzes the isomerization between 2-isopropylmalate and 3-isopropylmalate, via the formation of 2-isopropylmaleate. The protein is 3-isopropylmalate dehydratase small subunit of Nautilia profundicola (strain ATCC BAA-1463 / DSM 18972 / AmH).